Reading from the N-terminus, the 891-residue chain is Alanine--tRNA ligase (891 aa).

Zn(2+)-binding residues include histidine 574, histidine 578, cysteine 676, and histidine 680.

Belongs to the class-II aminoacyl-tRNA synthetase family. It depends on Zn(2+) as a cofactor.

The protein resides in the cytoplasm. It carries out the reaction tRNA(Ala) + L-alanine + ATP = L-alanyl-tRNA(Ala) + AMP + diphosphate. Catalyzes the attachment of alanine to tRNA(Ala) in a two-step reaction: alanine is first activated by ATP to form Ala-AMP and then transferred to the acceptor end of tRNA(Ala). Also edits incorrectly charged Ser-tRNA(Ala) and Gly-tRNA(Ala) via its editing domain. The chain is Alanine--tRNA ligase from Synechococcus sp. (strain WH7803).